The following is a 545-amino-acid chain: 4-coumarate--CoA ligase 1 (545 aa).

ATP-binding residues include serine 192, serine 193, glycine 194, threonine 195, threonine 196, and lysine 200. Residues tyrosine 242 and serine 246 each coordinate (E)-4-coumaroyl-AMP. Lysine 263 lines the CoA pocket. An SBD1 region spans residues 265-334 (DIAQFLELIP…AKFPNAKLGQ (70 aa)). The (E)-4-coumaroyl-AMP site is built by alanine 312, glutamine 334, glycine 335, threonine 339, and methionine 347. 3 residues coordinate ATP: glutamine 334, glycine 335, and threonine 339. The segment at 335–402 (GYGMTEAGPV…IRGDQIMKGY (68 aa)) is SBD2. 2 residues coordinate ATP: aspartate 423 and arginine 438. Lysine 440 and lysine 444 together coordinate (E)-4-coumaroyl-AMP. CoA-binding residues include lysine 446 and glycine 447. An ATP-binding site is contributed by lysine 529.

It belongs to the ATP-dependent AMP-binding enzyme family. The cofactor is Mg(2+).

It catalyses the reaction (E)-4-coumarate + ATP + CoA = (E)-4-coumaroyl-CoA + AMP + diphosphate. The enzyme catalyses (E)-4-coumarate + ATP + H(+) = (E)-4-coumaroyl-AMP + diphosphate. It carries out the reaction (E)-4-coumaroyl-AMP + CoA = (E)-4-coumaroyl-CoA + AMP + H(+). It participates in phytoalexin biosynthesis; 3,4',5-trihydroxystilbene biosynthesis; 3,4',5-trihydroxystilbene from trans-4-coumarate: step 1/2. Its function is as follows. Carboxylate--CoA ligase that may use 4-coumarate as substrate. Follows a two-step reaction mechanism, wherein the carboxylate substrate first undergoes adenylation by ATP, followed by a thioesterification in the presence of CoA to yield the final CoA thioester. This chain is 4-coumarate--CoA ligase 1 (4CL1), found in Solanum tuberosum (Potato).